Here is a 278-residue protein sequence, read N- to C-terminus: Elongation factor Ts (278 aa).

The involved in Mg(2+) ion dislocation from EF-Tu stretch occupies residues 80 to 83; that stretch reads TDFV.

It belongs to the EF-Ts family.

Its subcellular location is the cytoplasm. Associates with the EF-Tu.GDP complex and induces the exchange of GDP to GTP. It remains bound to the aminoacyl-tRNA.EF-Tu.GTP complex up to the GTP hydrolysis stage on the ribosome. The polypeptide is Elongation factor Ts (Paenarthrobacter aurescens (strain TC1)).